The chain runs to 35 residues: Photosystem II reaction center protein T (35 aa).

A helical membrane pass occupies residues Ala-3–Phe-23.

Belongs to the PsbT family. PSII is composed of 1 copy each of membrane proteins PsbA, PsbB, PsbC, PsbD, PsbE, PsbF, PsbH, PsbI, PsbJ, PsbK, PsbL, PsbM, PsbT, PsbY, PsbZ, Psb30/Ycf12, at least 3 peripheral proteins of the oxygen-evolving complex and a large number of cofactors. It forms dimeric complexes.

It localises to the plastid. The protein localises to the chloroplast thylakoid membrane. In terms of biological role, found at the monomer-monomer interface of the photosystem II (PS II) dimer, plays a role in assembly and dimerization of PSII. PSII is a light-driven water plastoquinone oxidoreductase, using light energy to abstract electrons from H(2)O, generating a proton gradient subsequently used for ATP formation. This is Photosystem II reaction center protein T from Cedrus deodara (Deodar cedar).